Here is a 299-residue protein sequence, read N- to C-terminus: ATP synthase gamma chain (299 aa).

This sequence belongs to the ATPase gamma chain family. As to quaternary structure, F-type ATPases have 2 components, CF(1) - the catalytic core - and CF(0) - the membrane proton channel. CF(1) has five subunits: alpha(3), beta(3), gamma(1), delta(1), epsilon(1). CF(0) has three main subunits: a, b and c.

It localises to the cell membrane. Functionally, produces ATP from ADP in the presence of a proton gradient across the membrane. The gamma chain is believed to be important in regulating ATPase activity and the flow of protons through the CF(0) complex. In Clavibacter michiganensis subsp. michiganensis (strain NCPPB 382), this protein is ATP synthase gamma chain.